The primary structure comprises 312 residues: tRNA (adenine(58)-N(1))-methyltransferase catalytic subunit trmt61a (312 aa).

Residues L85, 112 to 114 (SGS), E133, R138, 161 to 162 (DA), and D183 each bind S-adenosyl-L-methionine.

It belongs to the class I-like SAM-binding methyltransferase superfamily. TRM61 family. In terms of assembly, heterotetramer; composed of two copies of trmt6 and two copies of trmt61a.

The protein localises to the nucleus. It carries out the reaction adenosine(58) in tRNA + S-adenosyl-L-methionine = N(1)-methyladenosine(58) in tRNA + S-adenosyl-L-homocysteine + H(+). With respect to regulation, inhibited by calcium and magnesium ions and spermidine. Enhanced by KCl, NaCl and NH(4)Cl in concentrations from 0.1-0.25 M. Concentrations of more than 0.3 M are inhibitory. Its function is as follows. Catalytic subunit of tRNA (adenine-N(1)-)-methyltransferase, which catalyzes the formation of N(1)-methyladenine at position 58 (m1A58) in initiator methionyl-tRNA. In Dictyostelium discoideum (Social amoeba), this protein is tRNA (adenine(58)-N(1))-methyltransferase catalytic subunit trmt61a (trmt61a).